A 409-amino-acid polypeptide reads, in one-letter code: Dual-specificity RNA methyltransferase RlmN (409 aa).

E121 (proton acceptor) is an active-site residue. Residues 127–376 (EEGRGTLCIS…IRTPRGRDIL (250 aa)) form the Radical SAM core domain. A disulfide bridge links C134 with C379. C141, C145, and C148 together coordinate [4Fe-4S] cluster. S-adenosyl-L-methionine contacts are provided by residues 205–206 (GE), S237, 259–261 (SLH), and N336. C379 acts as the S-methylcysteine intermediate in catalysis.

Belongs to the radical SAM superfamily. RlmN family. It depends on [4Fe-4S] cluster as a cofactor.

It is found in the cytoplasm. It catalyses the reaction adenosine(2503) in 23S rRNA + 2 reduced [2Fe-2S]-[ferredoxin] + 2 S-adenosyl-L-methionine = 2-methyladenosine(2503) in 23S rRNA + 5'-deoxyadenosine + L-methionine + 2 oxidized [2Fe-2S]-[ferredoxin] + S-adenosyl-L-homocysteine. The enzyme catalyses adenosine(37) in tRNA + 2 reduced [2Fe-2S]-[ferredoxin] + 2 S-adenosyl-L-methionine = 2-methyladenosine(37) in tRNA + 5'-deoxyadenosine + L-methionine + 2 oxidized [2Fe-2S]-[ferredoxin] + S-adenosyl-L-homocysteine. Functionally, specifically methylates position 2 of adenine 2503 in 23S rRNA and position 2 of adenine 37 in tRNAs. m2A2503 modification seems to play a crucial role in the proofreading step occurring at the peptidyl transferase center and thus would serve to optimize ribosomal fidelity. The protein is Dual-specificity RNA methyltransferase RlmN of Agrobacterium fabrum (strain C58 / ATCC 33970) (Agrobacterium tumefaciens (strain C58)).